The sequence spans 634 residues: Probable threonine--tRNA ligase, cytoplasmic (634 aa).

One can recognise a TGS domain in the interval 1 to 61; that stretch reads MSIYVTFKGQ…NENQKIELYD (61 aa).

It belongs to the class-II aminoacyl-tRNA synthetase family.

The protein resides in the cytoplasm. It carries out the reaction tRNA(Thr) + L-threonine + ATP = L-threonyl-tRNA(Thr) + AMP + diphosphate + H(+). This chain is Probable threonine--tRNA ligase, cytoplasmic, found in Enterocytozoon bieneusi (strain H348) (Microsporidian parasite).